A 201-amino-acid chain; its full sequence is Adenylyl-sulfate kinase (201 aa).

Glycine 35–serine 42 contacts ATP. The active-site Phosphoserine intermediate is the serine 109.

Belongs to the APS kinase family.

The catalysed reaction is adenosine 5'-phosphosulfate + ATP = 3'-phosphoadenylyl sulfate + ADP + H(+). The protein operates within sulfur metabolism; hydrogen sulfide biosynthesis; sulfite from sulfate: step 2/3. Its function is as follows. Catalyzes the synthesis of activated sulfate. The chain is Adenylyl-sulfate kinase from Salmonella paratyphi C (strain RKS4594).